Here is a 74-residue protein sequence, read N- to C-terminus: Small ribosomal subunit protein uS15 (74 aa).

Belongs to the universal ribosomal protein uS15 family. As to quaternary structure, part of the 30S ribosomal subunit. Forms a bridge to the 50S subunit in the 70S ribosome, contacting the 23S rRNA.

Its function is as follows. One of the primary rRNA binding proteins, it binds directly to 16S rRNA where it helps nucleate assembly of the platform of the 30S subunit by binding and bridging several RNA helices of the 16S rRNA. Forms an intersubunit bridge (bridge B4) with the 23S rRNA of the 50S subunit in the ribosome. The protein is Small ribosomal subunit protein uS15 of Onion yellows phytoplasma (strain OY-M).